The sequence spans 717 residues: Fatty acid oxidation complex subunit alpha (717 aa).

Residues 1–189 are enoyl-CoA hydratase/isomerase; it reads MIYQSPTIEV…KVGAIDAVVA (189 aa). Asp296 is a substrate binding site. Positions 311 to 717 are 3-hydroxyacyl-CoA dehydrogenase; that stretch reads KKVNSAAVLG…ANNGSYYQQA (407 aa). Residues Met324, Asp343, 400-402, Lys407, and Ser429 contribute to the NAD(+) site; that span reads VVE. The active-site For 3-hydroxyacyl-CoA dehydrogenase activity is the His450. Asn453 contacts NAD(+). Asn500 and Tyr660 together coordinate substrate.

The protein in the N-terminal section; belongs to the enoyl-CoA hydratase/isomerase family. In the C-terminal section; belongs to the 3-hydroxyacyl-CoA dehydrogenase family. Heterotetramer of two alpha chains (FadB) and two beta chains (FadA).

It carries out the reaction a (3S)-3-hydroxyacyl-CoA + NAD(+) = a 3-oxoacyl-CoA + NADH + H(+). It catalyses the reaction a (3S)-3-hydroxyacyl-CoA = a (2E)-enoyl-CoA + H2O. The catalysed reaction is a 4-saturated-(3S)-3-hydroxyacyl-CoA = a (3E)-enoyl-CoA + H2O. The enzyme catalyses (3S)-3-hydroxybutanoyl-CoA = (3R)-3-hydroxybutanoyl-CoA. It carries out the reaction a (3Z)-enoyl-CoA = a 4-saturated (2E)-enoyl-CoA. It catalyses the reaction a (3E)-enoyl-CoA = a 4-saturated (2E)-enoyl-CoA. Its pathway is lipid metabolism; fatty acid beta-oxidation. In terms of biological role, involved in the aerobic and anaerobic degradation of long-chain fatty acids via beta-oxidation cycle. Catalyzes the formation of 3-oxoacyl-CoA from enoyl-CoA via L-3-hydroxyacyl-CoA. It can also use D-3-hydroxyacyl-CoA and cis-3-enoyl-CoA as substrate. The sequence is that of Fatty acid oxidation complex subunit alpha from Shewanella pealeana (strain ATCC 700345 / ANG-SQ1).